We begin with the raw amino-acid sequence, 549 residues long: Chaperonin GroEL (549 aa).

ATP-binding positions include 29 to 32 (TAGP), K50, 86 to 90 (DGTTT), G417, and D499.

This sequence belongs to the chaperonin (HSP60) family. In terms of assembly, forms a cylinder of 14 subunits composed of two heptameric rings stacked back-to-back. Interacts with the co-chaperonin GroES.

Its subcellular location is the cytoplasm. It catalyses the reaction ATP + H2O + a folded polypeptide = ADP + phosphate + an unfolded polypeptide.. Its function is as follows. Together with its co-chaperonin GroES, plays an essential role in assisting protein folding. The GroEL-GroES system forms a nano-cage that allows encapsulation of the non-native substrate proteins and provides a physical environment optimized to promote and accelerate protein folding. The chain is Chaperonin GroEL from Anaplasma marginale (strain Florida).